The following is a 165-amino-acid chain: Type VI lipase immunity protein Tli3 (165 aa).

Residues 1–21 (MKCKTLLIACLFGLGSAQALA) form the signal peptide.

Interacts with the Tle3 toxin.

Its subcellular location is the periplasm. Immunity protein that neutralizes the toxicity of the P.aeruginosa antibacterial toxin Tle3 in the periplasm to protect the cell from fratricide intoxication. The chain is Type VI lipase immunity protein Tli3 from Pseudomonas aeruginosa (strain ATCC 15692 / DSM 22644 / CIP 104116 / JCM 14847 / LMG 12228 / 1C / PRS 101 / PAO1).